Reading from the N-terminus, the 198-residue chain is Putative pseudouridine methyltransferase (198 aa).

S-adenosyl-L-methionine is bound by residues Leu-132 and Cys-186.

It belongs to the methyltransferase superfamily. TrmY family.

It localises to the cytoplasm. The sequence is that of Putative pseudouridine methyltransferase from Shewanella frigidimarina (strain NCIMB 400).